The sequence spans 89 residues: MYLDAAEKQEIFGKYGKSNSDTGSTEAQIALFSYRISHLTEHMKLNRKDYSTERALTMLVAKRRRLLNYLKDKDITRYRSIVKELGLRK.

Belongs to the universal ribosomal protein uS15 family. In terms of assembly, part of the 30S ribosomal subunit. Forms a bridge to the 50S subunit in the 70S ribosome, contacting the 23S rRNA.

One of the primary rRNA binding proteins, it binds directly to 16S rRNA where it helps nucleate assembly of the platform of the 30S subunit by binding and bridging several RNA helices of the 16S rRNA. Functionally, forms an intersubunit bridge (bridge B4) with the 23S rRNA of the 50S subunit in the ribosome. This is Small ribosomal subunit protein uS15 from Bacteroides thetaiotaomicron (strain ATCC 29148 / DSM 2079 / JCM 5827 / CCUG 10774 / NCTC 10582 / VPI-5482 / E50).